We begin with the raw amino-acid sequence, 360 residues long: Probable ribonucleoside-diphosphate reductase small subunit 376L (360 aa).

Residues D67, E98, and H101 each coordinate Fe cation. Residue Y105 is part of the active site. Fe cation is bound by residues E172, E206, and H209.

It belongs to the ribonucleoside diphosphate reductase small chain family. As to quaternary structure, heterotetramer composed of a homodimer of the large subunit (R1) and a homodimer of the small subunit (R2). Larger multisubunit protein complex are also active, composed of (R1)n(R2)n. Fe cation is required as a cofactor.

The catalysed reaction is a 2'-deoxyribonucleoside 5'-diphosphate + [thioredoxin]-disulfide + H2O = a ribonucleoside 5'-diphosphate + [thioredoxin]-dithiol. Its function is as follows. Ribonucleoside-diphosphate reductase holoenzyme provides the precursors necessary for viral DNA synthesis. Allows virus growth in non-dividing cells. Catalyzes the biosynthesis of deoxyribonucleotides from the corresponding ribonucleotides. This is Probable ribonucleoside-diphosphate reductase small subunit 376L from Acheta domesticus (House cricket).